A 468-amino-acid polypeptide reads, in one-letter code: Glutathione reductase (468 aa).

2 residues coordinate FAD: Ser-17 and Gly-18. Residue Ser-17 coordinates glutathione. Residue Arg-24 coordinates glutathione. 4 residues coordinate FAD: Glu-38, Thr-45, Cys-46, and Lys-54. A disulfide bond links Cys-46 and Cys-51. Glutathione is bound at residue Tyr-103. Residue Ala-119 participates in FAD binding. 6 residues coordinate NADP(+): Ala-185, Ile-188, Glu-191, Arg-208, Arg-214, and Gly-276. Asp-317 provides a ligand contact to FAD. Glu-323 serves as a coordination point for NADP(+). Thr-325 is a binding site for FAD. Arg-333 contributes to the glutathione binding site. Val-358 serves as a coordination point for NADP(+). A glutathione-binding site is contributed by Lys-410. An FAD-binding site is contributed by His-457. Residue His-457 is the Proton acceptor of the active site.

It belongs to the class-I pyridine nucleotide-disulfide oxidoreductase family. In terms of assembly, homodimer. FAD is required as a cofactor.

It localises to the cytoplasm. The protein localises to the mitochondrion. It catalyses the reaction 2 glutathione + NADP(+) = glutathione disulfide + NADPH + H(+). In terms of biological role, catalyzes the reduction of glutathione disulfide (GSSG) to reduced glutathione (GSH). Constitutes the major mechanism to maintain a high GSH:GSSG ratio in the cytosol. This Neurospora crassa (strain ATCC 24698 / 74-OR23-1A / CBS 708.71 / DSM 1257 / FGSC 987) protein is Glutathione reductase (gtr-1).